The sequence spans 179 residues: Cytoglobin-2 (179 aa).

The Globin domain occupies 18-167 (PLSDAEMEII…VYWHVTGAYT (150 aa)). The heme b site is built by histidine 81 and histidine 113.

The protein belongs to the globin family. As to quaternary structure, monomeric.

It is found in the cytoplasm. Its subcellular location is the nucleus. It catalyses the reaction Fe(II)-heme b-[protein] + nitric oxide + O2 = Fe(III)-heme b-[protein] + nitrate. The enzyme catalyses Fe(III)-heme b-[protein] + nitric oxide + H2O = Fe(II)-heme b-[protein] + nitrite + 2 H(+). The catalysed reaction is 2 superoxide + 2 H(+) = H2O2 + O2. It carries out the reaction H2O2 + AH2 = A + 2 H2O. In terms of biological role, probable multifunctional globin with a hexacoordinated heme iron required for the catalysis of various reactions depending on redox condition of the cell as well as oxygen availability. Has a nitric oxide dioxygenase (NOD) activity and is most probably involved in cell-mediated and oxygen-dependent nitric oxide consumption. Under normoxic conditions functions as a nitric oxide dioxygenase (NOD) but under hypoxic conditions the globin may switch its function to that of a nitrite (NO2) reductase (NiR), generating nitric oxide. Could also have peroxidase and superoxide dismutase activities, detoxifying reactive oxygen species and protecting cells against oxidative stress. Also binds dioxygen with low affinity and could function as an oxygen sensor but has probably no function as a respiratory oxygen carrier. The chain is Cytoglobin-2 from Oryzias latipes (Japanese rice fish).